The sequence spans 113 residues: Protein PucD (113 aa).

Its function is as follows. Seems to be required for the LH-II stabilization. The sequence is that of Protein PucD (pucD) from Rhodobacter capsulatus (Rhodopseudomonas capsulata).